We begin with the raw amino-acid sequence, 206 residues long: Protein SYM1 (206 aa).

A run of 3 helical transmembrane segments spans residues 16 to 36, 103 to 123, and 155 to 175; these read PLIT…YLAQ, LVFA…VLEF, and LFNF…IFSI.

The protein belongs to the peroxisomal membrane protein PXMP2/4 family.

It localises to the mitochondrion inner membrane. Functionally, may be involved in cellular response to stress. Required to maintain mitochondrial DNA (mtDNA) integrity and stability. In Debaryomyces hansenii (strain ATCC 36239 / CBS 767 / BCRC 21394 / JCM 1990 / NBRC 0083 / IGC 2968) (Yeast), this protein is Protein SYM1 (SYM1).